A 1090-amino-acid chain; its full sequence is Solute carrier family 38 member 10 (1090 aa).

10 consecutive transmembrane segments (helical) span residues 9–31, 36–58, 84–104, 123–143, 153–173, 229–249, 272–292, 323–343, 345–365, and 378–398; these read WGLI…PFCF, IVLG…MFLV, LVET…YVVI, TVRV…LSLQ, FSAM…LSSL, IFAS…FFGY, MIRV…ILPC, VLTL…PNVE, ILGF…PALI, and VVLW…LSVT. S441 is subject to Phosphoserine. 6 stretches are compositionally biased toward basic and acidic residues: residues 441–454, 493–508, 517–528, 544–560, 587–596, and 607–623; these read SQEK…KEVL, EAHR…KVVV, PEEKKPPPRLPD, ESEK…EGKR, PRKEDSRPGN, and DSVE…REPA. 3 disordered regions span residues 441–675, 729–831, and 857–1037; these read SQEK…AGSK, EIRQ…IDLR, and KAAP…ELAP. 2 positions are modified to phosphoserine: S608 and S636. 3 stretches are compositionally biased toward basic and acidic residues: residues 654–665, 729–744, and 758–767; these read EAAEQREKKEAE, EIRQ…KPKP, and GQEEEAEHAG. Position 769 is a phosphothreonine (T769). Phosphoserine is present on S887. Positions 923–936 are enriched in polar residues; the sequence is RQSGPTKAPVQTQA. Basic and acidic residues-rich tracts occupy residues 954 to 973, 1004 to 1013, and 1026 to 1037; these read PEVR…EQHK, ENAKPNRDLK, and DLASHPEQELAP.

It belongs to the amino acid/polyamine transporter 2 family. Expressed in neurons, astrocytes and epithelial cells scattered throughout the central nervous system structures including striatum, ependyma, cerebral cortex, hippocampus, hypothalamus, thalamus, pons, and cerebellum (at protein level). Highly expressed in paraventricular hypothalamic nucleus, suprachiasmatic nucleus, anterior hypothalamic area central part, in lateral ventricule and in dorsal 3rd ventricule (at protein level). Expressed in choroid plexus epithelial cells (at protein level).

The protein localises to the membrane. It carries out the reaction L-glutamate(out) = L-glutamate(in). It catalyses the reaction L-glutamine(out) = L-glutamine(in). The catalysed reaction is L-alanine(in) = L-alanine(out). The enzyme catalyses L-serine(in) = L-serine(out). It carries out the reaction L-leucine(in) = L-leucine(out). Facilitates bidirectional transport of amino acids. May act as a glutamate sensor that regulates glutamate-glutamine cycle and mTOR signaling in the brain. The transport mechanism remains to be elucidated. This Mus musculus (Mouse) protein is Solute carrier family 38 member 10.